Here is a 216-residue protein sequence, read N- to C-terminus: MFTQHHAQFPNVSAAIAAFQAGRPVLLLDDDDREDEADIIAAAENITLQTMAMMIRDCSGIVCLCLDEATVDELQLAPMVQNNQARHGTGFTVTIEAAEGITTGVSAQDRITTIDAALRSSAEQRHIVSPGHVFPLRARNGGVLTRRGHTEGSVDLARLAGLRPAAVLCELMNPDGSMARGEQVAVYARQYNLPVLTIEELARYREAMLEREAEPA.

D-ribulose 5-phosphate-binding positions include 33 to 34, Asp-38, 146 to 150, and Glu-170; these read RE and RRGHT. Glu-34 provides a ligand contact to Mg(2+). His-149 is a binding site for Mg(2+).

It belongs to the DHBP synthase family. In terms of assembly, homodimer. It depends on Mg(2+) as a cofactor. Mn(2+) serves as cofactor.

The enzyme catalyses D-ribulose 5-phosphate = (2S)-2-hydroxy-3-oxobutyl phosphate + formate + H(+). The protein operates within cofactor biosynthesis; riboflavin biosynthesis; 2-hydroxy-3-oxobutyl phosphate from D-ribulose 5-phosphate: step 1/1. Functionally, catalyzes the conversion of D-ribulose 5-phosphate to formate and 3,4-dihydroxy-2-butanone 4-phosphate. The protein is 3,4-dihydroxy-2-butanone 4-phosphate synthase of Pseudomonas putida (strain ATCC 47054 / DSM 6125 / CFBP 8728 / NCIMB 11950 / KT2440).